The chain runs to 258 residues: Global transcriptional regulator CodY (258 aa).

Residues 1–156 (MSSLLDKTRM…SATIIGLEIL (156 aa)) form a GAF domain region. A DNA-binding region (H-T-H motif) is located at residues 204–223 (ASKIADKVGITRSVIVNALR).

It belongs to the CodY family.

The protein localises to the cytoplasm. DNA-binding global transcriptional regulator which is involved in the adaptive response to starvation and acts by directly or indirectly controlling the expression of numerous genes in response to nutrient availability. During rapid exponential growth, CodY is highly active and represses genes whose products allow adaptation to nutrient depletion. This Clostridium botulinum (strain Okra / Type B1) protein is Global transcriptional regulator CodY.